The following is a 71-amino-acid chain: Protein SlyX homolog (71 aa).

Belongs to the SlyX family.

In Rhodospirillum rubrum (strain ATCC 11170 / ATH 1.1.1 / DSM 467 / LMG 4362 / NCIMB 8255 / S1), this protein is Protein SlyX homolog.